We begin with the raw amino-acid sequence, 505 residues long: AAA-ATPase At5g17760 (505 aa).

The helical transmembrane segment at 11 to 27 (TSVFTAYASMAGYMMMI) threads the bilayer. The interval 136–155 (GGGGGVGGRGGGGGRRGGMD) is disordered. The segment covering 137 to 151 (GGGGVGGRGGGGGRR) has biased composition (gly residues). 260-267 (GPPGTGKS) contributes to the ATP binding site.

Belongs to the AAA ATPase family. BCS1 subfamily. It depends on Mg(2+) as a cofactor.

It is found in the membrane. The enzyme catalyses ATP + H2O = ADP + phosphate + H(+). This Arabidopsis thaliana (Mouse-ear cress) protein is AAA-ATPase At5g17760.